Reading from the N-terminus, the 278-residue chain is Juvenile hormone acid O-methyltransferase (278 aa).

This sequence belongs to the methyltransferase superfamily. Specifically expressed in the corpora allata (CA).

It catalyses the reaction (2E,6E)-farnesoate + S-adenosyl-L-methionine = methyl (2E,6E)-farnesoate + S-adenosyl-L-homocysteine. The enzyme catalyses juvenile hormone III carboxylate + S-adenosyl-L-methionine = juvenile hormone III + S-adenosyl-L-homocysteine. Its function is as follows. O-methyltransferase that transfers a methyl group from S-adenosyl-L-methionine (SAM) to the carboxyl group of juvenile hormone acids to produce active juvenile hormones in the corpora allata, the last step during juvenile hormone biosynthesis. Also able to methylate farnesoate to methyl farnesoate. The protein is Juvenile hormone acid O-methyltransferase of Bombyx mori (Silk moth).